Here is a 341-residue protein sequence, read N- to C-terminus: Paired box protein Pax-9 (341 aa).

The segment at residues Ala-4 to Lys-130 is a DNA-binding region (paired). Residues Glu-7–Thr-63 are PAI subdomain. The segment at Thr-82–Lys-130 is RED subdomain. Positions Ala-168 to Pro-189 are interaction with KDM5B.

As to quaternary structure, interacts with KDM5B.

The protein localises to the nucleus. In terms of biological role, transcription factor required for normal development of thymus, parathyroid glands, ultimobranchial bodies, teeth, skeletal elements of skull and larynx as well as distal limbs. The sequence is that of Paired box protein Pax-9 (PAX9) from Saimiri boliviensis boliviensis (Bolivian squirrel monkey).